The primary structure comprises 522 residues: DNA damage-binding protein cmr1 (522 aa).

The segment covering 34 to 47 (VFTPTLPNRATGSQ) has biased composition (polar residues). 2 disordered regions span residues 34–89 (VFTP…KRKA) and 217–239 (QEKPTSVKQEDEDEEDDDPDPVL). Over residues 49 to 59 (KTKKKPAPKKV) the composition is skewed to basic residues. A WD 1 repeat occupies 182–223 (LTPERVYTMTFHPSETKPLIFAGDKMGHLGILDASQEKPTSV). Over residues 226-236 (EDEDEEDDDPD) the composition is skewed to acidic residues. 6 WD repeats span residues 244-284 (PHTR…SVER), 294-331 (VPLSGLDMAADDPNTLYWTTLEGEFGRYDMRTPKQGSV), 336-376 (LSEK…RREP), 381-422 (EHQS…ASWK), 445-488 (GRWV…LAQL), and 491-522 (DGITAVPAVAVFHRSKNWIAGGTASGKICLWM).

The protein belongs to the WD repeat DDB2/WDR76 family.

Functionally, DNA-binding protein that binds to both single- and double-stranded DNA. Binds preferentially to UV-damaged DNA. May be involved in DNA-metabolic processes. In Aspergillus oryzae (strain ATCC 42149 / RIB 40) (Yellow koji mold), this protein is DNA damage-binding protein cmr1.